A 582-amino-acid polypeptide reads, in one-letter code: Aspartate--tRNA ligase (582 aa).

An L-aspartate-binding site is contributed by glutamate 174. The aspartate stretch occupies residues 198-201 (QITK). Residue arginine 220 coordinates L-aspartate. ATP contacts are provided by residues 220 to 222 (RDE) and glutamine 229. Histidine 443 is an L-aspartate binding site. Residue glutamate 477 participates in ATP binding. Residue arginine 484 coordinates L-aspartate. 529–532 (GLDR) contributes to the ATP binding site.

It belongs to the class-II aminoacyl-tRNA synthetase family. Type 1 subfamily. As to quaternary structure, homodimer.

The protein resides in the cytoplasm. It catalyses the reaction tRNA(Asp) + L-aspartate + ATP = L-aspartyl-tRNA(Asp) + AMP + diphosphate. Functionally, catalyzes the attachment of L-aspartate to tRNA(Asp) in a two-step reaction: L-aspartate is first activated by ATP to form Asp-AMP and then transferred to the acceptor end of tRNA(Asp). The protein is Aspartate--tRNA ligase of Streptococcus pyogenes serotype M3 (strain ATCC BAA-595 / MGAS315).